Consider the following 459-residue polypeptide: Cysteine--tRNA ligase (459 aa).

Cysteine 27 contacts Zn(2+). The 'HIGH' region signature appears at 29-39 (VTVYDDCHIGH). Residues cysteine 208, histidine 233, and glutamate 237 each coordinate Zn(2+). The short motif at 265–269 (KMSKS) is the 'KMSKS' region element. ATP is bound at residue lysine 268.

The protein belongs to the class-I aminoacyl-tRNA synthetase family. As to quaternary structure, monomer. Zn(2+) serves as cofactor.

The protein localises to the cytoplasm. The catalysed reaction is tRNA(Cys) + L-cysteine + ATP = L-cysteinyl-tRNA(Cys) + AMP + diphosphate. This Francisella tularensis subsp. novicida (strain U112) protein is Cysteine--tRNA ligase.